A 78-amino-acid chain; its full sequence is Exodeoxyribonuclease 7 small subunit (78 aa).

This sequence belongs to the XseB family. As to quaternary structure, heterooligomer composed of large and small subunits.

The protein localises to the cytoplasm. It catalyses the reaction Exonucleolytic cleavage in either 5'- to 3'- or 3'- to 5'-direction to yield nucleoside 5'-phosphates.. In terms of biological role, bidirectionally degrades single-stranded DNA into large acid-insoluble oligonucleotides, which are then degraded further into small acid-soluble oligonucleotides. The sequence is that of Exodeoxyribonuclease 7 small subunit from Psychromonas ingrahamii (strain DSM 17664 / CCUG 51855 / 37).